A 181-amino-acid polypeptide reads, in one-letter code: Oligoribonuclease (181 aa).

In terms of domain architecture, Exonuclease spans 8 to 171 (LIWIDMEMTG…ADIYDSIEEL (164 aa)). Residue Tyr129 is part of the active site.

This sequence belongs to the oligoribonuclease family.

Its subcellular location is the cytoplasm. Functionally, 3'-to-5' exoribonuclease specific for small oligoribonucleotides. The chain is Oligoribonuclease from Nitrosomonas europaea (strain ATCC 19718 / CIP 103999 / KCTC 2705 / NBRC 14298).